The chain runs to 118 residues: Beta-2-microglobulin (118 aa).

Residues 1 to 20 form the signal peptide; that stretch reads MARFVALVLLGLLSLSGLDA. The region spanning 25–112 is the Ig-like C1-type domain; it reads PKIQVYSRHP…HVTLEQPRIV (88 aa). A disulfide bond links cysteine 45 and cysteine 99.

The protein belongs to the beta-2-microglobulin family. In terms of assembly, heterodimer of an alpha chain and a beta chain. Beta-2-microglobulin is the beta-chain of major histocompatibility complex class I molecules. Forms a heterotrimer with MR1 and a metabolite antigen.

The protein localises to the secreted. Component of the class I major histocompatibility complex (MHC). Involved in the presentation of peptide antigens to the immune system. The sequence is that of Beta-2-microglobulin (B2M) from Bos taurus (Bovine).